Consider the following 446-residue polypeptide: Bifunctional protein GlmU (446 aa).

The tract at residues 1 to 228 (MTKTAAVILA…AEELLGVNSR (228 aa)) is pyrophosphorylase. UDP-N-acetyl-alpha-D-glucosamine contacts are provided by residues 9 to 12 (LAAG), K23, Q72, 77 to 78 (GT), 100 to 102 (YGD), G140, E154, N169, and N226. D102 contributes to the Mg(2+) binding site. Position 226 (N226) interacts with Mg(2+). The tract at residues 229–249 (SELAAAEAVIQGRLREKAMEG) is linker. The interval 250–446 (GATLTAPETV…AHMRRLTGKN (197 aa)) is N-acetyltransferase. UDP-N-acetyl-alpha-D-glucosamine contacts are provided by R315 and K333. H345 functions as the Proton acceptor in the catalytic mechanism. Y348 and N359 together coordinate UDP-N-acetyl-alpha-D-glucosamine. Residues A362, 368–369 (NY), S387, A405, and R422 contribute to the acetyl-CoA site.

In the N-terminal section; belongs to the N-acetylglucosamine-1-phosphate uridyltransferase family. The protein in the C-terminal section; belongs to the transferase hexapeptide repeat family. As to quaternary structure, homotrimer. The cofactor is Mg(2+).

It localises to the cytoplasm. The catalysed reaction is alpha-D-glucosamine 1-phosphate + acetyl-CoA = N-acetyl-alpha-D-glucosamine 1-phosphate + CoA + H(+). It carries out the reaction N-acetyl-alpha-D-glucosamine 1-phosphate + UTP + H(+) = UDP-N-acetyl-alpha-D-glucosamine + diphosphate. It participates in nucleotide-sugar biosynthesis; UDP-N-acetyl-alpha-D-glucosamine biosynthesis; N-acetyl-alpha-D-glucosamine 1-phosphate from alpha-D-glucosamine 6-phosphate (route II): step 2/2. Its pathway is nucleotide-sugar biosynthesis; UDP-N-acetyl-alpha-D-glucosamine biosynthesis; UDP-N-acetyl-alpha-D-glucosamine from N-acetyl-alpha-D-glucosamine 1-phosphate: step 1/1. It functions in the pathway bacterial outer membrane biogenesis; LPS lipid A biosynthesis. Functionally, catalyzes the last two sequential reactions in the de novo biosynthetic pathway for UDP-N-acetylglucosamine (UDP-GlcNAc). The C-terminal domain catalyzes the transfer of acetyl group from acetyl coenzyme A to glucosamine-1-phosphate (GlcN-1-P) to produce N-acetylglucosamine-1-phosphate (GlcNAc-1-P), which is converted into UDP-GlcNAc by the transfer of uridine 5-monophosphate (from uridine 5-triphosphate), a reaction catalyzed by the N-terminal domain. This Rhodospirillum rubrum (strain ATCC 11170 / ATH 1.1.1 / DSM 467 / LMG 4362 / NCIMB 8255 / S1) protein is Bifunctional protein GlmU.